The following is a 476-amino-acid chain: Lactate utilization protein B (476 aa).

4Fe-4S ferredoxin-type domains follow at residues 304 to 334 and 353 to 382; these read GTEFQPVLQCIRCAACVNVCPVYRHIGGHSY and YDDYKELPYASSLCAACTEACPVKIPLHEL. The [4Fe-4S] cluster site is built by Cys313, Cys316, Cys319, Cys323, Cys366, Cys369, and Cys373. A disordered region spans residues 440–476; that stretch reads KGPGPLKAWTESREFPAPSKERFRDWFQTRQKGGNPS. Residues 449–466 show a composition bias toward basic and acidic residues; the sequence is TESREFPAPSKERFRDWF. Residues 467-476 show a composition bias toward polar residues; sequence QTRQKGGNPS.

This sequence belongs to the LutB/YkgF family.

Its function is as follows. Is involved in L-lactate degradation and allows cells to grow with lactate as the sole carbon source. Has probably a role as an electron transporter during oxidation of L-lactate. This Geobacillus kaustophilus (strain HTA426) protein is Lactate utilization protein B.